A 172-amino-acid polypeptide reads, in one-letter code: ATP synthase subunit b (172 aa).

Residues 13 to 33 (GINGGDILFQLVMFLILLALL) form a helical membrane-spanning segment.

Belongs to the ATPase B chain family. As to quaternary structure, F-type ATPases have 2 components, F(1) - the catalytic core - and F(0) - the membrane proton channel. F(1) has five subunits: alpha(3), beta(3), gamma(1), delta(1), epsilon(1). F(0) has three main subunits: a(1), b(2) and c(10-14). The alpha and beta chains form an alternating ring which encloses part of the gamma chain. F(1) is attached to F(0) by a central stalk formed by the gamma and epsilon chains, while a peripheral stalk is formed by the delta and b chains.

Its subcellular location is the cell membrane. In terms of biological role, f(1)F(0) ATP synthase produces ATP from ADP in the presence of a proton or sodium gradient. F-type ATPases consist of two structural domains, F(1) containing the extramembraneous catalytic core and F(0) containing the membrane proton channel, linked together by a central stalk and a peripheral stalk. During catalysis, ATP synthesis in the catalytic domain of F(1) is coupled via a rotary mechanism of the central stalk subunits to proton translocation. Its function is as follows. Component of the F(0) channel, it forms part of the peripheral stalk, linking F(1) to F(0). The chain is ATP synthase subunit b from Priestia megaterium (strain ATCC 12872 / QMB1551) (Bacillus megaterium).